The following is a 656-amino-acid chain: uncharacterized protein (656 aa).

Residues 623 to 656 (EIDIPGTPASIDPEWSRPPGSITDDHVFDAPLHR) are disordered. The segment covering 645–656 (TDDHVFDAPLHR) has biased composition (basic and acidic residues).

This is an uncharacterized protein from Mycobacterium tuberculosis (strain ATCC 25618 / H37Rv).